The following is a 560-amino-acid chain: Mitogen-activated protein kinase kinase kinase 3 (560 aa).

Residues 70-91 (KRQSSSSSDNTSDKEEVETEET) are disordered. Residues 303 to 557 (WLKGQLLGRG…AAELLHHPFV (255 aa)) form the Protein kinase domain. ATP contacts are provided by residues 309-317 (LGRGSYASV) and K331. D426 acts as the Proton acceptor in catalysis.

Belongs to the protein kinase superfamily. STE Ser/Thr protein kinase family. MAP kinase kinase kinase subfamily. In terms of tissue distribution, expressed at low levels in roots, stems, siliques, leaves, seedlings and flower buds.

It catalyses the reaction L-seryl-[protein] + ATP = O-phospho-L-seryl-[protein] + ADP + H(+). The catalysed reaction is L-threonyl-[protein] + ATP = O-phospho-L-threonyl-[protein] + ADP + H(+). The chain is Mitogen-activated protein kinase kinase kinase 3 from Arabidopsis thaliana (Mouse-ear cress).